A 205-amino-acid polypeptide reads, in one-letter code: High frequency lysogenization protein HflD homolog (205 aa).

This sequence belongs to the HflD family.

The protein resides in the cytoplasm. It is found in the cell inner membrane. The sequence is that of High frequency lysogenization protein HflD homolog from Aliivibrio fischeri (strain ATCC 700601 / ES114) (Vibrio fischeri).